The primary structure comprises 313 residues: Olfactory receptor 6E1 (313 aa).

Asparagine 3 carries an N-linked (GlcNAc...) asparagine glycan. 7 helical membrane-spanning segments follow: residues 25 to 45, 64 to 84, 96 to 116, 142 to 162, 192 to 212, 238 to 258, and 271 to 291; these read IFLG…LIIF, FAML…TNII, FLQA…LAVM, LVFC…SIVF, LVEF…LAVT, TCSS…FMYV, and KVVA…IYTL. A disulfide bond links cysteine 95 and cysteine 177.

Belongs to the G-protein coupled receptor 1 family.

It localises to the cell membrane. In terms of biological role, odorant receptor. Activated by (-)-citronellal and to a lesser extent by (+)-citronellal. Not activated by carvone or limonene. This is Olfactory receptor 6E1 from Mus musculus (Mouse).